A 331-amino-acid chain; its full sequence is PHD finger protein 11 (331 aa).

The segment at 42–78 (KRTCALCPKDVEYNVLYFAQSENIAAHENCLLYSSGL) adopts a C2HC pre-PHD-type zinc-finger fold. A PHD-type zinc finger spans residues 108–160 (LKCKFCHKRGATVGCDLKNCNKNYHFFCAKKDDAVPQSDGVRGIYKLLCQQHA).

As to quaternary structure, interacts with BRCA1 and RELA. As to expression, highly expressed in T and B-cells, as well as natural killer and mature dendritic cells. Expressed at higher levels in Th1 as compared to Th2 cells. Expressed at low levels in all normal tissues tested, including lung, testis, small intestine, breast, liver and placenta.

Its subcellular location is the nucleus. Functionally, positive regulator of Th1-type cytokine gene expression. The protein is PHD finger protein 11 (PHF11) of Homo sapiens (Human).